The primary structure comprises 550 residues: Membrane protein of ER body 2 (550 aa).

Residues 46-199 are disordered; it reads EFRSKAAATA…SSDSEEKSNL (154 aa). Composition is skewed to low complexity over residues 80–105 and 112–121; these read SVSE…SETG and TGSNEENGNN. Residues 122–132 are compositionally biased toward polar residues; sequence WLESSSTNLPN. Positions 134–165 form a coiled coil; sequence ENKRQRNGEDCEIEEEEENNERSLSDSEEKSN. Acidic residues predominate over residues 143–152; that stretch reads DCEIEEEEEN. Composition is skewed to basic and acidic residues over residues 153–166 and 185–198; these read NERS…KSNL and KNER…EKSN. The next 4 helical transmembrane spans lie at 374 to 394, 425 to 445, 458 to 478, and 500 to 520; these read STMN…IVLA, ILVA…VYAF, ISVF…KVYV, and SIVV…GEYI. Residues 393–418 are a coiled coil; that stretch reads LAQNFQDLRNSSDQEKDRYEELLGRR.

It belongs to the CCC1 family. In terms of assembly, interacts directly or indirectly with NAI2.

The protein localises to the endoplasmic reticulum membrane. May sequester excess cytosolic iron and manganese into endoplasmic reticulum to reduce metal ion toxicity. Not essential for the accumulation of ER body components, including PYK10. This is Membrane protein of ER body 2 (MEB2) from Arabidopsis thaliana (Mouse-ear cress).